The sequence spans 107 residues: Sperm-specific class P protein 34 (107 aa).

The tract at residues 1–26 (MINVDPPTGNYPATGGNSTHNITSES) is disordered. An MSP domain is found at 1-107 (MINVDPPTGN…GEIIVKLIAA (107 aa)). Polar residues predominate over residues 15 to 25 (GGNSTHNITSE).

In terms of tissue distribution, expressed at higher level in testis.

This Caenorhabditis elegans protein is Sperm-specific class P protein 34 (ssp-34).